The primary structure comprises 179 residues: Large ribosomal subunit protein uL5 (179 aa).

It belongs to the universal ribosomal protein uL5 family. Part of the 50S ribosomal subunit; part of the 5S rRNA/L5/L18/L25 subcomplex. Contacts the 5S rRNA and the P site tRNA. Forms a bridge to the 30S subunit in the 70S ribosome.

Functionally, this is one of the proteins that bind and probably mediate the attachment of the 5S RNA into the large ribosomal subunit, where it forms part of the central protuberance. In the 70S ribosome it contacts protein S13 of the 30S subunit (bridge B1b), connecting the 2 subunits; this bridge is implicated in subunit movement. Contacts the P site tRNA; the 5S rRNA and some of its associated proteins might help stabilize positioning of ribosome-bound tRNAs. This chain is Large ribosomal subunit protein uL5, found in Prochlorococcus marinus (strain MIT 9301).